Reading from the N-terminus, the 433-residue chain is 3-deoxy-D-manno-octulosonic acid transferase (433 aa).

Residues 11–31 traverse the membrane as a helical; Signal-anchor segment; sequence TFLYDCFLIFAFMVGLPRILY. The active-site Proton acceptor is the glutamate 70. CMP-binding positions include 277 to 278, 317 to 319, and 344 to 347; these read PR, IGW, and NLLE.

Belongs to the glycosyltransferase group 1 family. Glycosyltransferase 30 subfamily.

The protein resides in the cell inner membrane. It carries out the reaction lipid IVA (E. coli) + CMP-3-deoxy-beta-D-manno-octulosonate = alpha-Kdo-(2-&gt;6)-lipid IVA (E. coli) + CMP + H(+). The catalysed reaction is alpha-Kdo-(2-&gt;6)-lipid IVA (E. coli) + CMP-3-deoxy-beta-D-manno-octulosonate = alpha-Kdo-(2-&gt;4)-alpha-Kdo-(2-&gt;6)-lipid IVA (E. coli) + CMP + H(+). The enzyme catalyses alpha-Kdo-(2-&gt;4)-alpha-Kdo-(2-&gt;6)-lipid IVA (E. coli) + CMP-3-deoxy-beta-D-manno-octulosonate = alpha-Kdo-(2-&gt;8)-alpha-Kdo-(2-&gt;4)-alpha-Kdo-(2-&gt;6)-lipid IVA (E. coli) + CMP + H(+). It catalyses the reaction alpha-Kdo-(2-&gt;8)-alpha-Kdo-(2-&gt;4)-alpha-Kdo-(2-&gt;6)-lipid IVA (E. coli) + CMP-3-deoxy-beta-D-manno-octulosonate = alpha-Kdo-(2-&gt;8)-[alpha-Kdo-(2-&gt;4)]-alpha-Kdo-(2-&gt;4)-alpha-Kdo-(2-&gt;6)-lipid IVA + CMP + H(+). The protein operates within bacterial outer membrane biogenesis; LPS core biosynthesis. Involved in lipopolysaccharide (LPS) biosynthesis. Catalyzes the transfer of predominantly four 3-deoxy-D-manno-octulosonate (Kdo) residues from CMP-Kdo to lipid IV(A), the tetraacyldisaccharide-1,4'-bisphosphate precursor of lipid A. Thus generates the genus-specific LPS epitope of Chlamydia, composed of the trisaccharide alpha-Kdo-(2-&gt;8)-alpha-Kdo-(2-&gt;4)-alpha-Kdo. This Chlamydophila psittaci (strain ATCC VR-125 / 6BC) (Chlamydia psittaci) protein is 3-deoxy-D-manno-octulosonic acid transferase (waaA).